A 243-amino-acid polypeptide reads, in one-letter code: Derlin-1.1 (243 aa).

Residues 1–20 (MSSPAEYYKSLPPISKAYGT) lie on the Cytoplasmic side of the membrane. Residues 21 to 41 (LCFFTTVLVQLQILHPLFLYL) traverse the membrane as a helical segment. At 42-55 (DYPLVFKKFEIWRL) the chain is on the lumenal side. Residues 56-76 (LTSFFFLAPFSMKFGIRLLMI) traverse the membrane as a helical segment. The Cytoplasmic portion of the chain corresponds to 77–94 (ARYGVMLEKGAFDKRTAD). A helical transmembrane segment spans residues 95-115 (FLWMMIFGAISLLVLSIIPLF). The Lumenal segment spans residues 116-157 (NSFFLGIPMVSMLLYVWSRENPNAQINIYGLVQLRSFYLPWA). Residues 158-178 (MLLLDVIFGSSLMPGLLGIMV) form a helical membrane-spanning segment. At 179–243 (GHLYYFFAVL…FRGRSYRLNQ (65 aa)) the chain is on the cytoplasmic side. Positions 219–243 (SPVRPPANGNSGSGVFRGRSYRLNQ) are disordered.

Belongs to the derlin family. Expressed in roots, stalks, leaves, immature ears, embryo and endosperm.

It is found in the endoplasmic reticulum membrane. Its function is as follows. May be involved in the degradation process of specific misfolded endoplasmic reticulum (ER) luminal proteins. The chain is Derlin-1.1 (DER1.1) from Zea mays (Maize).